Reading from the N-terminus, the 2201-residue chain is Activating signal cointegrator 1 complex subunit 3 (2201 aa).

The residue at position 12 (Ser12) is a Phosphoserine. Coiled coils occupy residues 18 to 81 (KQDN…KQIV) and 328 to 356 (IQSEQEKQLMKQYRREEKRIARREKKAGE). Residues 486 to 669 (ETAYNTNENM…FLHVNPCIGL (184 aa)) form the Helicase ATP-binding 1 domain. An ATP-binding site is contributed by 499–506 (APTGAGKT). At Lys572 the chain carries N6-acetyllysine. The DEVH box motif lies at 611 to 614 (DEVH). Residues 696–914 (QLNNMDEVCY…GTVTNVEEAV (219 aa)) form the Helicase C-terminal 1 domain. The 310-residue stretch at 978 to 1287 (STDLGRTASH…GAEAVCIINF (310 aa)) folds into the SEC63 1 domain. A Helicase ATP-binding 2 domain is found at 1336 to 1511 (HTLYHTDCNV…WLNIRQMGLF (176 aa)). 1349–1356 (APTGSGKT) contributes to the ATP binding site. The DEIH box motif lies at 1453–1456 (DEIH). The Helicase C-terminal 2 domain occupies 1544-1739 (PTFQAIRSHS…VLSDHLNAEI (196 aa)). The SEC63 2 domain maps to 1812–2176 (PLTYGRIASY…LGLDQQYDIH (365 aa)).

The protein belongs to the helicase family. As to quaternary structure, identified in the ASCC complex that contains ASCC1, ASCC2 and ASCC3. Functions as a scaffolding subunit that interacts directly with both ASCC1 and ASCC2. Interacts directly with ALKBH3, and thereby recruits ALKBH3 to the ASCC complex. Part of the ASC-1/TRIP4 complex, that contains TRIP4, ASCC1, ASCC2 and ASCC3. Part of the RQT (ribosome quality control trigger) complex, that contains ASCC2, ASCC3 and TRIP4. Associates with ribosomes; recruited to collided ribosomes. Interacts with ZCCHC4. Interacts with ZNF598. Interacts with RPS3.

It is found in the nucleus. The protein localises to the nucleus speckle. It localises to the cytoplasm. The protein resides in the cytosol. The enzyme catalyses Couples ATP hydrolysis with the unwinding of duplex DNA by translocating in the 3'-5' direction.. It catalyses the reaction ATP + H2O = ADP + phosphate + H(+). Its function is as follows. ATPase involved both in DNA repair and rescue of stalled ribosomes. 3'-5' DNA helicase involved in repair of alkylated DNA: promotes DNA unwinding to generate single-stranded substrate needed for ALKBH3, enabling ALKBH3 to process alkylated N3-methylcytosine (3mC) within double-stranded regions. Also involved in activation of the ribosome quality control (RQC) pathway, a pathway that degrades nascent peptide chains during problematic translation. Drives the splitting of stalled ribosomes that are ubiquitinated in a ZNF598-dependent manner, as part of the ribosome quality control trigger (RQT) complex. Part of the ASC-1 complex that enhances NF-kappa-B, SRF and AP1 transactivation. The protein is Activating signal cointegrator 1 complex subunit 3 (ascc3) of Bos taurus (Bovine).